The primary structure comprises 465 residues: MRSASTLAVCAATLLQIACSTPIHPFHARSHQSYPSTEQWPLPVVGKQLEHQVPDEDLQEILSQISRDNIESTIRKLASFGTRHTLSSQTDPVRGIGAARTWLTAKFQEAADESEGRMTVDWNSFIKYPGDNERIIFPVNITTVVATLKGSEDPDRYYLTGGHYDSRNSNPIDYQGDAPGAVDDASGVAVSLELARIFAHYKPKATIVFTAFAGEEQGLLGAQNLAQTYKNASVNLAAMINLDMVGNSKAEDGTTDPHNIRLFCQGTPLTENASTTTSRLSIGGDNDSPARNLGRFIYEVASNAWTEMTAGYTGVRFVQPNEDYTQQHQNVTVRNGKQYGDLTQWLDFEYNTRAAKVVASTMWSLANAPAAPTNVGVNTTMSDNFSQFKWDAPKGLSVQGYEILYRETIEPHWTNVIDLGNVTWYNLTSATIHKDNVIFGVRSVGKGGYKSPAVLPFPFGCARNC.

A signal peptide spans 1 to 20 (MRSASTLAVCAATLLQIACS). N-linked (GlcNAc...) asparagine glycosylation is present at N140. The Zn(2+) site is built by H163, D183, and E216. N-linked (GlcNAc...) asparagine glycosylation is present at N231. D243 provides a ligand contact to Zn(2+). Residues N272, N330, N378, N384, N421, and N426 are each glycosylated (N-linked (GlcNAc...) asparagine). A Fibronectin type-III domain is found at 371–464 (APTNVGVNTT…LPFPFGCARN (94 aa)).

This sequence belongs to the peptidase M28 family. M28B subfamily. Requires Zn(2+) as cofactor.

It localises to the secreted. This is Probable zinc metalloprotease PTT_17836 from Pyrenophora teres f. teres (strain 0-1) (Barley net blotch fungus).